The chain runs to 337 residues: Phenylpyruvate C(3)-methyltransferase (337 aa).

The protein belongs to the methyltransferase superfamily.

The enzyme catalyses 3-phenylpyruvate + S-adenosyl-L-methionine = (3S)-2-oxo-3-phenylbutanoate + S-adenosyl-L-homocysteine + H(+). Its pathway is antibiotic biosynthesis. In terms of biological role, S-adenosyl-L-methionine-dependent methyltransferase involved in synthesis of the nonproteinogenic amino acid (2S,3S)-beta-methyl-phenylalanine, a building block of the antibiotic mannopeptimycin. This Streptomyces hygroscopicus protein is Phenylpyruvate C(3)-methyltransferase (mppJ).